We begin with the raw amino-acid sequence, 718 residues long: Sodium/myo-inositol cotransporter (718 aa).

At 1 to 9 the chain is on the extracellular side; sequence MRAVLDTAD. The helical transmembrane segment at 10–29 threads the bilayer; sequence IAIVALYFILVMCIGFFAMW. Over 30 to 38 the chain is Cytoplasmic; it reads KSNRSTVSG. A helical transmembrane segment spans residues 39–57; sequence YFLAGRSMTWVAIGASLFV. Over 58–86 the chain is Extracellular; the sequence is SNIGSEHFIGLAGSGAASGFAVGAWEFNA. Residues 87-110 traverse the membrane as a helical segment; it reads LLLLQLLGWVFIPIYIRSGVYTMP. Topologically, residues 111–123 are cytoplasmic; sequence EYLSKRFGGHRIQ. A helical membrane pass occupies residues 124–144; that stretch reads VYFAALSLILYIFTKLSVDLY. Over 145 to 157 the chain is Extracellular; the sequence is SGALFIQESLGWN. Residues 158-183 traverse the membrane as a helical segment; the sequence is LYVSVILLIGMTALLTVTGGLVAVIY. The Cytoplasmic portion of the chain corresponds to 184–186; it reads TDT. Residues 187–205 form a helical membrane-spanning segment; the sequence is LQALLMIIGALTLMIISIM. Topologically, residues 206–303 are extracellular; sequence EIGGFEEVKR…HAKGSTLMAG (98 aa). Residue asparagine 232 is glycosylated (N-linked (GlcNAc...) asparagine). Residues 304-324 traverse the membrane as a helical segment; sequence FLKLLPMFIIVVPGMISRILF. At 325–353 the chain is on the cytoplasmic side; that stretch reads TDDIACINPEHCMLVCGSRAGCSNIAYPR. A helical transmembrane segment spans residues 354-376; that stretch reads LVMKLVPVGLRGLMMAVMIAALM. Over 377 to 406 the chain is Extracellular; the sequence is SDLDSIFNSASTIFTLDVYKLIRKSASSRE. The helical transmembrane segment at 407-430 threads the bilayer; sequence LMIVGRIFVAFMVVISIAWVPIIV. The Cytoplasmic segment spans residues 431–443; sequence EMQGGQMYLYIQE. The chain crosses the membrane as a helical span at residues 444-462; the sequence is VADYLTPPVAALFLLAIFW. Over 463–510 the chain is Extracellular; sequence KRCNEQGAFYGGMAGFVLGAVRLILAFAYRAPECDQPDNRPGFIKDIH. The chain crosses the membrane as a helical span at residues 511–532; the sequence is YMYVATGLFWVTGLITVIVSLL. Residues 533 to 695 lie on the Cytoplasmic side of the membrane; it reads TPPPTKEQIR…QMLEETRQVK (163 aa). 2 positions are modified to phosphoserine: serine 594 and serine 632. The helical transmembrane segment at 696 to 716 threads the bilayer; sequence VILNIGLFAVCSLGIFMFVYF. Topologically, residues 717–718 are extracellular; it reads SL.

The protein belongs to the sodium:solute symporter (SSF) (TC 2.A.21) family. Interacts with KCNQ2 (via the pore module). Interacts with KCNQ1; this interaction is direct. Forms coregulatory complexes with ion channels KCNQ2-KCNQ3 and KCNQ1-KCNE2.

The protein resides in the apical cell membrane. It is found in the basolateral cell membrane. The enzyme catalyses myo-inositol(out) + 2 Na(+)(out) = myo-inositol(in) + 2 Na(+)(in). It carries out the reaction scyllo-inositol(out) + 2 Na(+)(out) = scyllo-inositol(in) + 2 Na(+)(in). Electrogenic Na(+)-coupled sugar symporter that actively transports myo-inositol and its stereoisomer scyllo-inositol across the plasma membrane, with a Na(+) to sugar coupling ratio of 2:1. Maintains myo-inositol concentration gradient that defines cell volume and fluid balance during osmotic stress, in particular in the fetoplacental unit and central nervous system. Forms coregulatory complexes with voltage-gated K(+) ion channels, allosterically altering ion selectivity, voltage dependence and gating kinetics of the channel. In turn, K(+) efflux through the channel forms a local electrical gradient that modulates electrogenic Na(+)-coupled myo-inositol influx through the transporter. Associates with KCNQ1-KCNE2 channel in the apical membrane of choroid plexus epithelium and regulates the myo-inositol gradient between blood and cerebrospinal fluid with an impact on neuron excitability. Associates with KCNQ2-KCNQ3 channel altering ion selectivity, increasing Na(+) and Cs(+) permeation relative to K(+) permeation. Provides myo-inositol precursor for biosynthesis of phosphoinositides such as PI(4,5)P2, thus indirectly affecting the activity of phosphoinositide-dependent ion channels and Ca(2+) signaling upon osmotic stress. The protein is Sodium/myo-inositol cotransporter of Homo sapiens (Human).